The sequence spans 176 residues: Caltractin (176 aa).

The disordered stretch occupies residues 1 to 27 (MNRAAIAAGKPSGSISTGKPRRKTRAE). 4 EF-hand domains span residues 31–66 (EMKH…LGFD), 67–102 (VKKE…KISN), 104–139 (DPTE…LSEN), and 140–175 (ISDE…TSAF). Residues Asp44, Asp46, Ser48, Arg50, and Glu55 each contribute to the Ca(2+) site. Asp153, Asp155, Asp157, Glu159, and Asp164 together coordinate Ca(2+).

Belongs to the centrin family. In terms of assembly, monomer.

It localises to the cytoplasm. It is found in the cytoskeleton. The protein resides in the microtubule organizing center. Its subcellular location is the centrosome. Its function is as follows. Plays a fundamental role in microtubule-organizing center structure and function. This Giardia intestinalis (Giardia lamblia) protein is Caltractin (CAL).